The chain runs to 482 residues: MVATTEQTVGKITQVIGPVVDAEFPSGKLPRIYNALTVKGTNPAGAEVNITCEVQQLLGDNQVRAVAMSSTDGLVRGMEIIDTGAPISVPVGKSTLGRIFNVLGEPVDEKGSVNVNETFPIHRPAPKLTDLETKPKVFETGIKVIDLLTPYRQGGKIGLFGGAGVGKTVIMMELINNIAIQHGGVSVFGGVGERTREGNDLYNEMIESKVINPDNPEDSKIALVYGQMNEPPGARMRVGLSALTMAEYFRDVNKQDVLLFIDNIFRFVQAGSEVSALLGRMPSAVGYQPTLGTDVGDLQERITSTKEGSITSIQAVYVPADDLTDPAPATTFAHLDGTTVLSRGLASKGIYPAVDPLDSTSTMLQPNIVGQEHYKTARAVQSTLQRYKELQDIIAILGLDELSEEDRQTVDRARKIERFLSQPFFVAEVFTGSPGKYVTLEDTIKGFNMILNGELDDLPEQAFYMVGNIDEAIAKAEKLKKG.

161-168 (GGAGVGKT) contributes to the ATP binding site.

Belongs to the ATPase alpha/beta chains family. F-type ATPases have 2 components, CF(1) - the catalytic core - and CF(0) - the membrane proton channel. CF(1) has five subunits: alpha(3), beta(3), gamma(1), delta(1), epsilon(1). CF(0) has four main subunits: a(1), b(1), b'(1) and c(9-12).

The protein localises to the cellular thylakoid membrane. It catalyses the reaction ATP + H2O + 4 H(+)(in) = ADP + phosphate + 5 H(+)(out). In terms of biological role, produces ATP from ADP in the presence of a proton gradient across the membrane. The catalytic sites are hosted primarily by the beta subunits. This Gloeothece citriformis (strain PCC 7424) (Cyanothece sp. (strain PCC 7424)) protein is ATP synthase subunit beta.